Here is a 516-residue protein sequence, read N- to C-terminus: GMP synthase [glutamine-hydrolyzing] (516 aa).

The Glutamine amidotransferase type-1 domain maps to 5-199 (PIVILDFGSQ…ARKICGITSK (195 aa)). Cys-82 serves as the catalytic Nucleophile. Catalysis depends on residues His-173 and Glu-175. A GMPS ATP-PPase domain is found at 200 to 391 (WDMGHFAKEQ…LGLPREMVYR (192 aa)). Residue 227–233 (SGGVDSS) coordinates ATP.

Homodimer.

It catalyses the reaction XMP + L-glutamine + ATP + H2O = GMP + L-glutamate + AMP + diphosphate + 2 H(+). Its pathway is purine metabolism; GMP biosynthesis; GMP from XMP (L-Gln route): step 1/1. In terms of biological role, catalyzes the synthesis of GMP from XMP. This is GMP synthase [glutamine-hydrolyzing] from Nitratiruptor sp. (strain SB155-2).